Reading from the N-terminus, the 1345-residue chain is DNA-directed RNA polymerase subunit beta (1345 aa).

It belongs to the RNA polymerase beta chain family. As to quaternary structure, the RNAP catalytic core consists of 2 alpha, 1 beta, 1 beta' and 1 omega subunit. When a sigma factor is associated with the core the holoenzyme is formed, which can initiate transcription.

It carries out the reaction RNA(n) + a ribonucleoside 5'-triphosphate = RNA(n+1) + diphosphate. Functionally, DNA-dependent RNA polymerase catalyzes the transcription of DNA into RNA using the four ribonucleoside triphosphates as substrates. The sequence is that of DNA-directed RNA polymerase subunit beta from Shewanella sp. (strain MR-4).